The primary structure comprises 313 residues: Acetaldehyde dehydrogenase 2 (313 aa).

An NAD(+)-binding site is contributed by 12–15 (SGNI). The active-site Acyl-thioester intermediate is cysteine 132. Residues 163–171 (SAGPGTRAN) and asparagine 287 each bind NAD(+).

Belongs to the acetaldehyde dehydrogenase family.

It catalyses the reaction acetaldehyde + NAD(+) + CoA = acetyl-CoA + NADH + H(+). In Paraburkholderia xenovorans (strain LB400), this protein is Acetaldehyde dehydrogenase 2 (amnH).